We begin with the raw amino-acid sequence, 643 residues long: Threonine--tRNA ligase (643 aa).

The region spanning 1-61 is the TGS domain; sequence MPIITLPDGS…TEDSKLEIIT (61 aa). The interval 243-534 is catalytic; the sequence is DHRKIGKALD…ITEEYAGFFP (292 aa). Residues Cys334, His385, and His511 each coordinate Zn(2+).

It belongs to the class-II aminoacyl-tRNA synthetase family. In terms of assembly, homodimer. Zn(2+) is required as a cofactor.

The protein localises to the cytoplasm. It carries out the reaction tRNA(Thr) + L-threonine + ATP = L-threonyl-tRNA(Thr) + AMP + diphosphate + H(+). In terms of biological role, catalyzes the attachment of threonine to tRNA(Thr) in a two-step reaction: L-threonine is first activated by ATP to form Thr-AMP and then transferred to the acceptor end of tRNA(Thr). Also edits incorrectly charged L-seryl-tRNA(Thr). The sequence is that of Threonine--tRNA ligase from Pasteurella multocida (strain Pm70).